A 662-amino-acid chain; its full sequence is Probable protein phosphatase 2C 4 (662 aa).

Ser153 is modified (phosphoserine). One can recognise a PPM-type phosphatase domain in the interval 249–653; sequence DVSLENQNLQ…DDVSIVVISL (405 aa). Asp286, Gly287, Asp581, and Asp644 together coordinate Mn(2+).

It belongs to the PP2C family. Mg(2+) is required as a cofactor. It depends on Mn(2+) as a cofactor. Expressed in seedlings, roots, leaves, stems, young inflorescences, flowers and siliques.

The protein localises to the nucleus. The catalysed reaction is O-phospho-L-seryl-[protein] + H2O = L-seryl-[protein] + phosphate. It catalyses the reaction O-phospho-L-threonyl-[protein] + H2O = L-threonyl-[protein] + phosphate. Functionally, involved in leaf development regulation. In Arabidopsis thaliana (Mouse-ear cress), this protein is Probable protein phosphatase 2C 4 (PLL5).